The chain runs to 398 residues: Alpha-(1,3)-fucosyltransferase 4 (398 aa).

At 1-15 the chain is on the cytoplasmic side; sequence MRARWGRRGARRGGP. The helical; Signal-anchor for type II membrane protein transmembrane segment at 16 to 40 threads the bilayer; that stretch reads GLPGTHLALLAASLLSSSVAIYVCW. Topologically, residues 41 to 398 are lumenal; it reads KQLPPLPWAS…VPNLAGWFQQ (358 aa). N-linked (GlcNAc...) asparagine glycosylation is found at Asn84, Asn183, and Asn311.

It belongs to the glycosyltransferase 10 family.

It localises to the golgi apparatus. Its subcellular location is the golgi stack membrane. It catalyses the reaction a beta-D-galactosyl-(1-&gt;4)-N-acetyl-beta-D-glucosaminyl derivative + GDP-beta-L-fucose = a beta-D-galactosyl-(1-&gt;4)-[alpha-L-fucosyl-(1-&gt;3)]-N-acetyl-beta-D-glucosaminyl derivative + GDP + H(+). It carries out the reaction an N-acetyl-alpha-neuraminyl-(2-&gt;3)-beta-D-galactosyl-(1-&gt;4)-N-acetyl-beta-D-glucosaminyl derivative + GDP-beta-L-fucose = an alpha-Neu5Ac-(2-&gt;3)-beta-D-Gal-(1-&gt;4)-[alpha-L-Fuc-(1-&gt;3)]-beta-D-GlcNAc derivative + GDP + H(+). The catalysed reaction is an alpha-Neu5Ac-(2-&gt;3)-beta-D-Gal-(1-&gt;4)-beta-D-GlcNAc-(1-&gt;3)-beta-D-Gal-(1-&gt;4)-beta-D-GlcNAc derivative + GDP-beta-L-fucose = an alpha-Neu5Ac-(2-&gt;3)-beta-D-Gal-(1-&gt;4)-beta-D-GlcNAc-(1-&gt;3)-beta-D-Gal-(1-&gt;4)-[alpha-L-Fuc-(1-&gt;3)]-beta-D-GlcNAc derivative + GDP + H(+). The enzyme catalyses an alpha-Neu5Ac-(2-&gt;3)-beta-D-Gal-(1-&gt;4)-beta-D-GlcNAc6S derivative + GDP-beta-L-fucose = an alpha-Neu5Ac-(2-&gt;3)-beta-D-Gal-(1-&gt;4)-[alpha-L-Fuc-(1-&gt;3)]-beta-D-GlcNAc6S derivative + GDP + H(+). The protein operates within protein modification; protein glycosylation. Its function is as follows. Catalyzes alpha(1-&gt;3) linkage of fucosyl moiety transferred from GDP-beta-L-fucose to N-acetyl glucosamine (GlcNAc) within type 2 lactosamine (LacNAc, Gal-beta(1-&gt;4)GlcNAc) glycan attached to N- or O-linked glycoproteins. Robustly fucosylates nonsialylated distal LacNAc unit of the polylactosamine chain to form Lewis X antigen (CD15), a glycan determinant known to mediate important cellular functions in development and immunity. Fucosylates with lower efficiency sialylated LacNAc acceptors to form sialyl Lewis X and 6-sulfo sialyl Lewis X determinants that serve as recognition epitopes for C-type lectins. Together with FUT7 contributes to SELE, SELL and SELP selectin ligand biosynthesis and selectin-dependent lymphocyte homing, leukocyte migration and blood leukocyte homeostasis. In a cell type specific manner, may also fucosylate the internal LacNAc unit of the polylactosamine chain to form VIM-2 antigen that serves as recognition epitope for SELE. The sequence is that of Alpha-(1,3)-fucosyltransferase 4 (FUT4) from Bos taurus (Bovine).